A 1199-amino-acid polypeptide reads, in one-letter code: MSLPTYATLDGNEAVARVAYLLSEVIAIYPITPSSPMGEWSDAWAAEHRPNLWGTVPLVVEMQSEGGAAGTVHGALQSGALTTTFTASQGLMLMLPNMHKIAGELTAMVLHVAARSLAAQGLSIFGDHSDVMAARNTGFAMLSSNSVQEAHDFALIATATSFATRIPGLHFFDGFRTSHEEQKIELLPQEVLRGLIKDEDVLAHRGRALTPDRPKLRGTAQNPDVYFQARETVNPFYASYPNVLEQVMEQFGQLTGRHYRPYEYCGHPEAERVIVLMGSGAETAQETVDFLTAQGEKVGLLKVRLYRPFAGDRLVNALPKTVQKIAVLDRCKEPGSIGEPLYQDVLTAFFEAGMMPKIIGGRYGLSSKEFTPAMVKGVLDHLNQTNPKNHFTVGINDDLSHTSIDYDPSFSTEADSVVRAIFYGLGSDGTVGANKNSIKIIGEDTDNYAQGYFVYDSKKSGSVTVSHLRFGPNPILSTYLISQANFVACHQWEFLEQFEVLEPAVDGGVFLVNSPYGPEEIWREFPRKVQQEIIDKNLKVYTINANDVARDAGMGRRTNTVMQTCFFALAGVLPREEAIAKIKQSVQKTYGKKGQEIVEMNIKAVDSTLAHLYEVSVPETVSDDAPAMRPVVPDNAPVFVREVLGKIMARQGDDLPVSALPCDGTYPTATTQWEKRNVGHEIPVWDPDVCVQCGKCVIVCPHAVIRGKVYEEAELANAPVSFKFTNAKDHDWQGSKFTIQVAPEDCTGCGICVDVCPAKNKSQPRLRAINMAPQLPLREQERENWDFFLDLPNPDRLSLNLNKISHQQMQEPLFEFSGACAGCGETPYLKLVSQLFGDRMLVANATGCSSIYGGNLPTTPWAQNAEGRGPAWSNSLFEDNAEFGLGFRVAIDKQTEFAGELLKTFAGELGDSLVSEILNNAQTTEADIFEQRQLVEQVKQRLQNLETPQAQMFLSVADYLVKKSVWIIGGDGWAYDIGYGGLDHVLASGRNVNILVMDTEVYSNTGGQASKATPRAAVAKFAAGGKPSPKKDLGLMAMTYGNVYVASIAMGAKNEQSIKAFMEAEAYPGVSLIIAYSHCIAHGINMTTAMNHQKELVDSGRWLLYRYNPLLADEGKNPLQLDMGSPKVAIDKTVYSENRFAMLTRSQPEEAKRLMKLAQGDVNTRWAMYEYLAKRSLGGEINGNNHGVSPSPEVIAKSV.

2 4Fe-4S ferredoxin-type domains span residues 681–710 and 737–766; these read EIPV…GKVY and FTIQ…QPRL. [4Fe-4S] cluster contacts are provided by Cys690, Cys693, Cys696, Cys700, Cys746, Cys749, Cys752, Cys756, Cys820, Cys823, Cys848, and Cys1079.

This sequence belongs to the pyruvate:ferredoxin/flavodoxin oxidoreductase family. The cofactor is [4Fe-4S] cluster.

It catalyses the reaction oxidized [flavodoxin] + pyruvate + CoA + 2 H(+) = reduced [flavodoxin] + acetyl-CoA + CO2. Functionally, oxidoreductase required for the transfer of electrons from pyruvate to flavodoxin. The chain is Putative pyruvate-flavodoxin oxidoreductase (nifJ) from Synechocystis sp. (strain ATCC 27184 / PCC 6803 / Kazusa).